We begin with the raw amino-acid sequence, 154 residues long: 17.0 kDa class II heat shock protein (154 aa).

The 116-residue stretch at 39-154 (DARAMAATPA…KPKTIEIKVA (116 aa)) folds into the sHSP domain.

This sequence belongs to the small heat shock protein (HSP20) family.

Its subcellular location is the cytoplasm. The sequence is that of 17.0 kDa class II heat shock protein (HSP18) from Zea mays (Maize).